Reading from the N-terminus, the 600-residue chain is NAD-dependent malic enzyme, mitochondrial (600 aa).

The transit peptide at 1-68 (MTRTPFTLSL…NMPIAAPVRT (68 aa)) directs the protein to the mitochondrion. Fumarate is bound at residue Arg-93. Catalysis depends on Tyr-138, which acts as the Proton donor. Arg-194 lines the (S)-malate pocket. Arg-194 provides a ligand contact to NAD(+). Catalysis depends on Lys-212, which acts as the Proton acceptor. A divalent metal cation is bound by residues Glu-283, Asp-284, and Asp-307. NAD(+) contacts are provided by Gly-344 and Ala-347. (S)-malate contacts are provided by Asn-458 and Asn-502.

It belongs to the malic enzymes family. Mg(2+) is required as a cofactor. The cofactor is Mn(2+).

Its subcellular location is the mitochondrion matrix. The protein resides in the cytoplasm. The protein localises to the cytosol. It localises to the nucleus. The catalysed reaction is (S)-malate + NAD(+) = pyruvate + CO2 + NADH. It carries out the reaction oxaloacetate + H(+) = pyruvate + CO2. Functionally, NAD-dependent mitochondrial malic enzyme that catalyzes the oxidative decarboxylation of malate to pyruvate. In Cryptococcus neoformans var. grubii serotype A (strain H99 / ATCC 208821 / CBS 10515 / FGSC 9487) (Filobasidiella neoformans var. grubii), this protein is NAD-dependent malic enzyme, mitochondrial.